Consider the following 367-residue polypeptide: S-adenosylmethionine:tRNA ribosyltransferase-isomerase (367 aa).

This sequence belongs to the QueA family. In terms of assembly, monomer.

Its subcellular location is the cytoplasm. The enzyme catalyses 7-aminomethyl-7-carbaguanosine(34) in tRNA + S-adenosyl-L-methionine = epoxyqueuosine(34) in tRNA + adenine + L-methionine + 2 H(+). It participates in tRNA modification; tRNA-queuosine biosynthesis. In terms of biological role, transfers and isomerizes the ribose moiety from AdoMet to the 7-aminomethyl group of 7-deazaguanine (preQ1-tRNA) to give epoxyqueuosine (oQ-tRNA). The sequence is that of S-adenosylmethionine:tRNA ribosyltransferase-isomerase from Beijerinckia indica subsp. indica (strain ATCC 9039 / DSM 1715 / NCIMB 8712).